An 838-amino-acid chain; its full sequence is AP-4 complex subunit beta (838 aa).

The hinge stretch occupies residues 582–673; it reads NSSKQTTSIN…NQNNNQNNNQ (92 aa). The tract at residues 648 to 683 is disordered; sequence ITDGNQNNNQNNNQNNNQNNNQNNNQNNQNNNNQNN. The segment covering 652–683 has biased composition (low complexity); sequence NQNNNQNNNQNNNQNNNQNNNQNNQNNNNQNN. Residues 674–838 form an ear region; that stretch reads NNQNNNNQNN…LSIPIPKIFN (165 aa).

It belongs to the adaptor complexes large subunit family. May be part of the adaptor protein complex 4 (AP-4), a heterotetramer composed of two large adaptins (epsilon-type subunitand beta-type subunit), a medium adaptin (mu-type subunit) and a small adaptin (sigma-type).

The protein localises to the golgi apparatus. Its subcellular location is the trans-Golgi network membrane. Probable component of an adaptor protein complex. Adaptor protein complexes are vesicle coat components involved both in vesicle formation and cargo selection. They control the vesicular transport of proteins in different trafficking pathways. This chain is AP-4 complex subunit beta (ap4b1), found in Dictyostelium discoideum (Social amoeba).